Reading from the N-terminus, the 379-residue chain is Armadillo repeat-containing X-linked protein 3 (379 aa).

Residues 1-6 (MGYARK) lie on the Mitochondrial intermembrane side of the membrane. Mitochondrion outer membrane (MOM)-targeting sequence stretches follow at residues 1–6 (MGYARK) and 26–37 (RLTRGRKQNKEK). The helical; Signal-anchor transmembrane segment at 7–29 (VGWVTAGLVIGAGACYCIYRLTR) threads the bilayer. Residues 30-379 (GRKQNKEKMA…AEHMFPKSQE (350 aa)) lie on the Cytoplasmic side of the membrane. Residues serine 61, serine 67, and serine 72 each carry the phosphoserine modification. Positions 89-98 (RARARARARA) are nuclear localization signal. Residues 95–106 (RARATRARRAVQ) are compositionally biased toward basic residues. The tract at residues 95-116 (RARATRARRAVQKRASPNSDDT) is disordered. Serine 110 carries the post-translational modification Phosphoserine. ARM repeat units follow at residues 111-151 (PNSD…NNAA), 153-192 (AFNR…NLSV), and 233-272 (VTNE…NLAE).

The protein belongs to the eutherian X-chromosome-specific Armcx family. Interacts (via ARM domain) with MIRO1, MIRO2 and TRAK2. The interaction with Miro is calcium-dependent. Interacts with SOX10.

It localises to the mitochondrion outer membrane. It is found in the cytoplasm. The protein resides in the nucleus. Regulates mitochondrial aggregation and transport in axons in living neurons. May link mitochondria to the TRAK2-kinesin motor complex via its interaction with Miro and TRAK2. Mitochondrial distribution and dynamics is regulated through ARMCX3 protein degradation, which is promoted by PCK and negatively regulated by WNT1. Enhances the SOX10-mediated transactivation of the neuronal acetylcholine receptor subunit alpha-3 and beta-4 subunit gene promoters. This Homo sapiens (Human) protein is Armadillo repeat-containing X-linked protein 3 (ARMCX3).